The sequence spans 375 residues: Fluoride export protein 2 (375 aa).

The Cytoplasmic portion of the chain corresponds to 1 to 11 (MIFNPVISNHK). A helical transmembrane segment spans residues 12–32 (LSHYIHVFCTFTTFCILGTET). The Extracellular segment spans residues 33-34 (RQ). A helical membrane pass occupies residues 35-55 (AITALSTYTPAFVTAPTVLWS). The Cytoplasmic segment spans residues 56–79 (NCSSCMLMGIMQSLNAYTWMKDHQ). Residues 80-100 (VLFLGVTTGYCGALSSFSSML) traverse the membrane as a helical segment. The Extracellular segment spans residues 101–127 (LEMFEHSTNLTNGNIANHTKLPNRAYG). Asn109 and Asn117 each carry an N-linked (GlcNAc...) asparagine glycan. Residues 128 to 148 (IMEFLSVLLVHLMVSMGSLIF) traverse the membrane as a helical segment. The Cytoplasmic segment spans residues 149 to 213 (GRQLGKEVIV…FKKFFDVVDK (65 aa)). Residues 214–234 (LAYALAFPLIILFVVLCAYYE) traverse the membrane as a helical segment. The N-linked (GlcNAc...) asparagine glycan is linked to Asn235. Residues 235–241 (NYSRGKW) lie on the Extracellular side of the membrane. A helical transmembrane segment spans residues 242 to 262 (TLPCLFGIFAGFLRYWLAEMF). Over 263–268 (NKTNKK) the chain is Cytoplasmic. A helical transmembrane segment spans residues 269–289 (FPLGTFLANVFATLLIGIFTM). Residues 290-310 (VQRGKKHFSTDIPIVNSLNSC) are Extracellular-facing. A helical transmembrane segment spans residues 311 to 331 (HIVSALISGFCGTLSTISTFI). Residues 332-338 (NEGYKLS) lie on the Cytoplasmic side of the membrane. The chain crosses the membrane as a helical span at residues 339 to 359 (FINMLIYYTVSIGISYCLLVI). Residues 360–375 (TLGSYAWTRGLTNPIC) lie on the Extracellular side of the membrane.

The protein belongs to the fluoride channel Fluc/FEX (TC 1.A.43) family.

The protein localises to the cell membrane. The enzyme catalyses fluoride(in) = fluoride(out). In terms of biological role, fluoride channel required for the rapid expulsion of cytoplasmic fluoride. The polypeptide is Fluoride export protein 2 (Saccharomyces cerevisiae (strain ATCC 204508 / S288c) (Baker's yeast)).